Consider the following 1410-residue polypeptide: MDIYDTQTLGVVVFGGFMVVSAIGIFLVSTFSMKETSYEEALANQRKEMAKTHHQKVEKKKKEKTVEKKGKTKKKEEKPNGKIPDHDPAPNVTVLLREPVRAPAVAVAPTPVQPPIIVAPVATVPAMPQEKLASSPKDKKKKEKKVAKVEPAVSSVVNSIQVLTSKAAILETAPKEVPMVVVPPVGAKGNTPATGTTQGKKAEGTQNQSKKAEGAPNQGRKAEGTPNQGKKTEGTPNQGKKAEGTPNQGKKAEGTPNQGKKAEGAQNQGKKVDTTPNQGKKVEGAPTQGRKAEGAQNQAKKVEGAQNQGKKAEGAQNQGKKGEGAQNQGKKAEGAQNQGKKAEGAQNQGKKAEGAQNQGKKAEGAQNQGKKAEGAQNQGKKAEGAQNQGKKVEGAQNQGKKAEGAQNQGKKAEGAQNQGKKAEGAQNQGKKAEGAQNQGKKAEGAQNQGKKAEGAQNQGKKAEGAQNQGKKVEGAQNQGKKAEGAQNQGKKAEGAQNQGKKAEGAQNQGQKGEGAQNQGKKTEGAQGKKAERSPNQGKKGEGAPIQGKKADSVANQGTKVEGITNQGKKAEGSPSEGKKAEGSPNQGKKADAAANQGKKTESASVQGRNTDVAQSPEAPKQEAPAKKKSGSKKKGEPGPPDADGPLYLPYKTLVSTVGSMVFNEGEAQRLIEILSEKAGIIQDTWHKATQKGDPVAILKRQLEEKEKLLATEQEDAAVAKSKLRELNKEMAAEKAKAAAGEAKVKKQLVAREQEITAVQARMQASYREHVKEVQQLQGKIRTLQEQLENGPNTQLARLQQENSILRDALNQATSQVESKQNAELAKLRQELSKVSKELVEKSEAVRQDEQQRKALEAKAAAFEKQVLQLQASHRESEEALQKRLDEVSRELCHTQSSHASLRADAEKAQEQQQQMAELHSKLQSSEAEVRSKCEELSGLHGQLQEARAENSQLTERIRSIEALLEAGQARDAQDVQASQAEADQQQTRLKELESQVSGLEKEAIELREAVEQQKVKNNDLREKNWKAMEALATAEQACKEKLLSLTQAKEESEKQLCLIEAQTMEALLALLPELSVLAQQNYTEWLQDLKEKGPTLLKHPPAPAEPSSDLASKLREAEETQSTLQAECDQYRSILAETEGMLRDLQKSVEEEEQVWRAKVGAAEEELQKSRVTVKHLEEIVEKLKGELESSDQVREHTSHLEAELEKHMAAASAECQNYAKEVAGLRQLLLESQSQLDAAKSEAQKQSDELALVRQQLSEMKSHVEDGDIAGAPASSPEAPPAEQDPVQLKTQLEWTEAILEDEQTQRQKLTAEFEEAQTSACRLQEELEKLRTAGPLESSETEEASQLKERLEKEKKLTSDLGRAATRLQELLKTTQEQLAREKDTVKKLQEQLEKAEDGSSSKEGTSV.

Topologically, residues 1-7 (MDIYDTQ) are lumenal. The chain crosses the membrane as a helical span at residues 8 to 28 (TLGVVVFGGFMVVSAIGIFLV). Over 29-1410 (STFSMKETSY…GSSSKEGTSV (1382 aa)) the chain is Cytoplasmic. Disordered regions lie at residues 44-90 (NQRK…DPAP) and 129-152 (QEKL…VEPA). Basic residues predominate over residues 52 to 63 (THHQKVEKKKKE). The segment covering 64–88 (KTVEKKGKTKKKEEKPNGKIPDHDP) has biased composition (basic and acidic residues). Residue Lys-148 forms a Glycyl lysine isopeptide (Lys-Gly) (interchain with G-Cter in SUMO2) linkage. Phosphoserine is present on residues Ser-159 and Ser-165. Disordered stretches follow at residues 173–648 (APKE…PLYL) and 895–925 (QSSH…LQSS). 2 stretches are compositionally biased toward polar residues: residues 191-209 (TPAT…QNQS) and 225-238 (TPNQ…TPNQ). Repeat copies occupy residues 197 to 206 (TQGKKAEGTQ), 207 to 216 (NQSKKAEGAP), 217 to 226 (NQGRKAEGTP), 227 to 236 (NQGKKTEGTP), 237 to 246 (NQGKKAEGTP), 247 to 256 (NQGKKAEGTP), 257 to 266 (NQGKKAEGAQ), 267 to 276 (NQGKKVDTTP), 277 to 286 (NQGKKVEGAP), 287 to 296 (TQGRKAEGAQ), 297 to 306 (NQAKKVEGAQ), 307 to 316 (NQGKKAEGAQ), 317 to 326 (NQGKKGEGAQ), 327 to 336 (NQGKKAEGAQ), 337 to 346 (NQGKKAEGAQ), 347 to 356 (NQGKKAEGAQ), 357 to 366 (NQGKKAEGAQ), 367 to 376 (NQGKKAEGAQ), 377 to 386 (NQGKKAEGAQ), 387 to 396 (NQGKKVEGAQ), 397 to 406 (NQGKKAEGAQ), 407 to 416 (NQGKKAEGAQ), 417 to 426 (NQGKKAEGAQ), 427 to 436 (NQGKKAEGAQ), 437 to 446 (NQGKKAEGAQ), 447 to 456 (NQGKKAEGAQ), 457 to 466 (NQGKKAEGAQ), 467 to 476 (NQGKKVEGAQ), 477 to 486 (NQGKKAEGAQ), 487 to 496 (NQGKKAEGAQ), 497 to 506 (NQGKKAEGAQ), 507 to 516 (NQGQKGEGAQ), and 517 to 526 (NQGKKTEGAQ). The tract at residues 197–604 (TQGKKAEGTQ…NQGKKTESAS (408 aa)) is 41 X 10 AA approximate tandem repeats of [TN]-Q-[GSA]-[KRQT]-K-[ATGSV]-[ED]-[GTAS]-[ATIS]-[PQTAS]. Phosphothreonine is present on residues Thr-225, Thr-235, Thr-245, and Thr-255. Composition is skewed to polar residues over residues 265-278 (AQNQ…TPNQ) and 295-519 (AQNQ…QNQG). Basic and acidic residues predominate over residues 520–532 (KKTEGAQGKKAER). One copy of the 34; approximate repeat lies at 527 to 534 (GKKAERSP). At Ser-533 the chain carries Phosphoserine. Copy 35 of the repeat occupies 535–544 (NQGKKGEGAP). Residues 545–554 (IQGKKADSVA) form a 36; approximate repeat. A compositionally biased stretch (polar residues) spans 553–567 (VANQGTKVEGITNQG). 2 tandem repeats follow at residues 555–564 (NQGTKVEGIT) and 565–574 (NQGKKAEGSP). The span at 568 to 581 (KKAEGSPSEGKKAE) shows a compositional bias: basic and acidic residues. Phosphoserine occurs at positions 573 and 583. The 39; approximate repeat unit spans residues 575–584 (SEGKKAEGSP). Tandem repeats lie at residues 585–594 (NQGKKADAAA) and 595–604 (NQGKKTESAS). The segment covering 602–612 (SASVQGRNTDV) has biased composition (polar residues). Position 615 is a phosphoserine (Ser-615). A Glycyl lysine isopeptide (Lys-Gly) (interchain with G-Cter in SUMO1) cross-link involves residue Lys-620. Phosphoserine is present on Ser-900. At Lys-932 the chain carries N6-acetyllysine. Phosphoserine is present on residues Ser-959 and Ser-978. 4 disordered regions span residues 1093-1122 (GPTL…ETQS), 1260-1287 (EMKS…EQDP), 1330-1362 (EKLR…LTSD), and 1378-1410 (QEQL…GTSV). Residues Ser-1276 and Ser-1277 each carry the phosphoserine modification. Basic and acidic residues-rich tracts occupy residues 1347 to 1360 (SQLK…KKLT) and 1381 to 1403 (LARE…DGSS).

The protein localises to the endoplasmic reticulum membrane. Acts as a ribosome receptor and mediates interaction between the ribosome and the endoplasmic reticulum membrane. The chain is Ribosome-binding protein 1 (RRBP1) from Homo sapiens (Human).